Reading from the N-terminus, the 366-residue chain is Ribonuclease P protein subunit drpp30 (366 aa).

Residues 265–366 (EDTQPTNNNI…DIDNNKRKRE (102 aa)) form a disordered region. The span at 275-290 (PHEKHINKESTGKETI) shows a compositional bias: basic and acidic residues. 2 stretches are compositionally biased toward low complexity: residues 291–324 (PKPT…TPSI) and 333–351 (TAKS…AQKQ). The span at 352–366 (GKMDIDIDNNKRKRE) shows a compositional bias: basic and acidic residues.

This sequence belongs to the eukaryotic/archaeal RNase P protein component 3 family.

It is found in the nucleus. The enzyme catalyses Endonucleolytic cleavage of RNA, removing 5'-extranucleotides from tRNA precursor.. In terms of biological role, component of ribonuclease P, a protein complex that generates mature tRNA molecules by cleaving their 5'-ends. This is Ribonuclease P protein subunit drpp30 (drpp30) from Dictyostelium discoideum (Social amoeba).